Consider the following 330-residue polypeptide: Ketol-acid reductoisomerase (NADP(+)) (330 aa).

The KARI N-terminal Rossmann domain maps to 2–182 (ARMYYDEDAN…GGTRAGVLET (181 aa)). NADP(+)-binding positions include 25-28 (YGSQ), Ser-51, Ser-53, and 83-86 (DEVQ). Residue His-108 is part of the active site. Gly-134 contributes to the NADP(+) binding site. Positions 183–328 (TFREETETDL…QDLRAMMSWL (146 aa)) constitute a KARI C-terminal knotted domain. Mg(2+) is bound by residues Asp-191, Glu-195, Glu-227, and Glu-231. Ser-252 is a substrate binding site.

It belongs to the ketol-acid reductoisomerase family. Mg(2+) is required as a cofactor.

It catalyses the reaction (2R)-2,3-dihydroxy-3-methylbutanoate + NADP(+) = (2S)-2-acetolactate + NADPH + H(+). The catalysed reaction is (2R,3R)-2,3-dihydroxy-3-methylpentanoate + NADP(+) = (S)-2-ethyl-2-hydroxy-3-oxobutanoate + NADPH + H(+). Its pathway is amino-acid biosynthesis; L-isoleucine biosynthesis; L-isoleucine from 2-oxobutanoate: step 2/4. The protein operates within amino-acid biosynthesis; L-valine biosynthesis; L-valine from pyruvate: step 2/4. In terms of biological role, involved in the biosynthesis of branched-chain amino acids (BCAA). Catalyzes an alkyl-migration followed by a ketol-acid reduction of (S)-2-acetolactate (S2AL) to yield (R)-2,3-dihydroxy-isovalerate. In the isomerase reaction, S2AL is rearranged via a Mg-dependent methyl migration to produce 3-hydroxy-3-methyl-2-ketobutyrate (HMKB). In the reductase reaction, this 2-ketoacid undergoes a metal-dependent reduction by NADPH to yield (R)-2,3-dihydroxy-isovalerate. The polypeptide is Ketol-acid reductoisomerase (NADP(+)) (Microcystis aeruginosa (strain NIES-843 / IAM M-2473)).